A 237-amino-acid polypeptide reads, in one-letter code: Ribose-5-phosphate isomerase A (237 aa).

Substrate is bound by residues 33–36, 90–93, and 103–106; these read TGST, DGAD, and KGGG. E112 serves as the catalytic Proton acceptor. K130 serves as a coordination point for substrate.

The protein belongs to the ribose 5-phosphate isomerase family. As to quaternary structure, homodimer.

The enzyme catalyses aldehydo-D-ribose 5-phosphate = D-ribulose 5-phosphate. Its pathway is carbohydrate degradation; pentose phosphate pathway; D-ribose 5-phosphate from D-ribulose 5-phosphate (non-oxidative stage): step 1/1. Its function is as follows. Catalyzes the reversible conversion of ribose-5-phosphate to ribulose 5-phosphate. This Trichodesmium erythraeum (strain IMS101) protein is Ribose-5-phosphate isomerase A.